The sequence spans 72 residues: Small ribosomal subunit protein bS20 (72 aa).

The protein belongs to the bacterial ribosomal protein bS20 family.

Binds directly to 16S ribosomal RNA. The sequence is that of Small ribosomal subunit protein bS20 (rpsT) from Klebsiella pneumoniae.